A 120-amino-acid chain; its full sequence is UPF0102 protein HSM_1206 (120 aa).

It belongs to the UPF0102 family.

In Histophilus somni (strain 2336) (Haemophilus somnus), this protein is UPF0102 protein HSM_1206.